Consider the following 177-residue polypeptide: Putative fimbrin-like protein FimI (177 aa).

The first 19 residues, M1–A19, serve as a signal peptide directing secretion. A disulfide bridge links C40 with C81.

The protein belongs to the fimbrial protein family.

The protein localises to the fimbrium. The polypeptide is Putative fimbrin-like protein FimI (fimI) (Salmonella typhi).